The chain runs to 678 residues: Vacuolar fusion protein mon1 (678 aa).

3 disordered regions span residues 1 to 116 (MDRD…YTSP), 449 to 474 (EENNSNNTNNPEQPPQPPPPKPVTSP), and 568 to 591 (FETSSPPLPSSSPSENGSSQKTTE). Low complexity predominate over residues 10-20 (NDGTNDNNDTT). Positions 63-77 (RPTTQVSTIDISTLS) are enriched in polar residues. Positions 87-105 (STSATSATSATSATRSVAS) are enriched in low complexity. Polar residues predominate over residues 106-116 (PQSSASGYTSP). Residues 450–459 (ENNSNNTNNP) are compositionally biased toward low complexity. Pro residues predominate over residues 460 to 471 (EQPPQPPPPKPV).

Belongs to the MON1/SAND family.

The protein localises to the endosome. It localises to the multivesicular body membrane. Its subcellular location is the prevacuolar compartment membrane. The protein resides in the vacuole membrane. Functionally, in complex with CCZ1, is required for multiple vacuole delivery pathways including the cytoplasm to vacuole transport (Cvt), autophagy, pexophagy and endocytosis. The MON1-CCZ1 complex acts at the fusion of vesicles with the vacuole, through its regulation of the SNARE complex during the coordinated priming and docking stages of fusion, and particularly at the stage of tethering/docking. The sequence is that of Vacuolar fusion protein mon1 (apg-13) from Neurospora crassa (strain ATCC 24698 / 74-OR23-1A / CBS 708.71 / DSM 1257 / FGSC 987).